The following is a 423-amino-acid chain: Histidine--tRNA ligase (423 aa).

Belongs to the class-II aminoacyl-tRNA synthetase family. In terms of assembly, homodimer.

Its subcellular location is the cytoplasm. The enzyme catalyses tRNA(His) + L-histidine + ATP = L-histidyl-tRNA(His) + AMP + diphosphate + H(+). This is Histidine--tRNA ligase from Rhodococcus erythropolis (strain PR4 / NBRC 100887).